We begin with the raw amino-acid sequence, 339 residues long: tRNA-splicing endonuclease (339 aa).

Residues Tyr-274, His-285, and Lys-316 contribute to the active site.

Belongs to the tRNA-intron endonuclease family. Archaeal long subfamily. In terms of assembly, homodimer. The cofactor is Ca(2+). Mg(2+) serves as cofactor. The N-terminus is blocked.

It carries out the reaction pretRNA = a 3'-half-tRNA molecule with a 5'-OH end + a 5'-half-tRNA molecule with a 2',3'-cyclic phosphate end + an intron with a 2',3'-cyclic phosphate and a 5'-hydroxyl terminus.. Its function is as follows. Endonuclease that removes tRNA introns. Cleaves pre-tRNA at the 5'- and 3'-splice sites to release the intron. The products are an intron and two tRNA half-molecules bearing 2',3' cyclic phosphate and 5'-OH termini. Recognizes a pseudosymmetric substrate in which 2 bulged loops of 3 bases are separated by a stem of 4 bp. This is tRNA-splicing endonuclease from Haloferax volcanii (strain ATCC 29605 / DSM 3757 / JCM 8879 / NBRC 14742 / NCIMB 2012 / VKM B-1768 / DS2) (Halobacterium volcanii).